The primary structure comprises 395 residues: Chorismate synthase (395 aa).

An NADP(+)-binding site is contributed by R48. FMN is bound at residue 125 to 127 (RSS). The tract at residues 264-292 (RNEDWTFDDGESFDHVESEEGDPVPVGND) is disordered. Residues G298, 313–317 (HAPTS), and R340 contribute to the FMN site. The disordered stretch occupies residues 373 to 395 (PDRVDGNPGQYDTDYHPSSPDND).

It belongs to the chorismate synthase family. It depends on FMNH2 as a cofactor.

The enzyme catalyses 5-O-(1-carboxyvinyl)-3-phosphoshikimate = chorismate + phosphate. The protein operates within metabolic intermediate biosynthesis; chorismate biosynthesis; chorismate from D-erythrose 4-phosphate and phosphoenolpyruvate: step 7/7. Functionally, catalyzes the anti-1,4-elimination of the C-3 phosphate and the C-6 proR hydrogen from 5-enolpyruvylshikimate-3-phosphate (EPSP) to yield chorismate, which is the branch point compound that serves as the starting substrate for the three terminal pathways of aromatic amino acid biosynthesis. This reaction introduces a second double bond into the aromatic ring system. This chain is Chorismate synthase, found in Halorubrum lacusprofundi (strain ATCC 49239 / DSM 5036 / JCM 8891 / ACAM 34).